A 237-amino-acid chain; its full sequence is Large ribosomal subunit protein uL1 (237 aa).

The protein belongs to the universal ribosomal protein uL1 family. As to quaternary structure, part of the 50S ribosomal subunit.

Functionally, binds directly to 23S rRNA. The L1 stalk is quite mobile in the ribosome, and is involved in E site tRNA release. Its function is as follows. Protein L1 is also a translational repressor protein, it controls the translation of the L11 operon by binding to its mRNA. The sequence is that of Large ribosomal subunit protein uL1 from Dehalococcoides mccartyi (strain CBDB1).